The following is a 353-amino-acid chain: MSFDIKWENLTVDNTINESIQSFLDEQFKKLSLPSYISNLSVTDFQLGEIPPEITIRHIGDPFDEFYEDTTDSPETEQPKEEYTGDDDDDDDDDEDDESDDDGPGLSTISEGIHLLNFNRTGSPLPDATPLSPRPMNRSRDSFQSILHPFGVNIGPTGSETPTNLLNQSYFSSRRVSIKQKQPLYDENDIQLIVEFNYKGNLHMNILVNLLVNYPSPNFISLPIKLHITDIEIHSIATIAYLKKAVFLSFLCDVNDETIPEFNNSQSIEYYTKNNPIDIIKKIKIESEIGEVESNILRNVGKVERFLVEQLRNILREELAWPSWICLDMNDDDEEEEEEENPSESSSTTHVGS.

Positions 1–330 (MSFDIKWENL…WPSWICLDMN (330 aa)) constitute an SMP-LTD domain. Acidic residues-rich tracts occupy residues 64 to 75 (DEFYEDTTDSPE), 84 to 103 (TGDD…DDDG), and 330 to 342 (NDDD…EENP). 2 disordered regions span residues 64-140 (DEFY…NRSR) and 330-353 (NDDD…HVGS).

It belongs to the MDM12 family. As to quaternary structure, component of the ER-mitochondria encounter structure (ERMES) or MDM complex, composed of MMM1, MDM10, MDM12 and MDM34. An MMM1 homodimer associates with one molecule of MDM12 on each side in a pairwise head-to-tail manner, and the SMP-LTD domains of MMM1 and MDM12 generate a continuous hydrophobic tunnel for phospholipid trafficking.

The protein localises to the mitochondrion outer membrane. It is found in the endoplasmic reticulum membrane. Its function is as follows. Component of the ERMES/MDM complex, which serves as a molecular tether to connect the endoplasmic reticulum (ER) and mitochondria. Components of this complex are involved in the control of mitochondrial shape and protein biogenesis, and function in nonvesicular lipid trafficking between the ER and mitochondria. MDM12 is required for the interaction of the ER-resident membrane protein MMM1 and the outer mitochondrial membrane-resident beta-barrel protein MDM10. The MDM12-MMM1 subcomplex functions in the major beta-barrel assembly pathway that is responsible for biogenesis of all mitochondrial outer membrane beta-barrel proteins, and acts in a late step after the SAM complex. The MDM10-MDM12-MMM1 subcomplex further acts in the TOM40-specific pathway after the action of the MDM12-MMM1 complex. Essential for establishing and maintaining the structure of mitochondria and maintenance of mtDNA nucleoids. The chain is Mitochondrial distribution and morphology protein 12 from Candida tropicalis (strain ATCC MYA-3404 / T1) (Yeast).